The sequence spans 211 residues: Uracil phosphoribosyltransferase (211 aa).

5-phospho-alpha-D-ribose 1-diphosphate is bound by residues R77, R102, and D129–S137. Residues I192 and G197 to A199 contribute to the uracil site. D198 is a binding site for 5-phospho-alpha-D-ribose 1-diphosphate.

It belongs to the UPRTase family. The cofactor is Mg(2+).

The enzyme catalyses UMP + diphosphate = 5-phospho-alpha-D-ribose 1-diphosphate + uracil. Its pathway is pyrimidine metabolism; UMP biosynthesis via salvage pathway; UMP from uracil: step 1/1. Its activity is regulated as follows. Allosterically activated by GTP. In terms of biological role, catalyzes the conversion of uracil and 5-phospho-alpha-D-ribose 1-diphosphate (PRPP) to UMP and diphosphate. In Corynebacterium diphtheriae (strain ATCC 700971 / NCTC 13129 / Biotype gravis), this protein is Uracil phosphoribosyltransferase.